Reading from the N-terminus, the 516-residue chain is MTALDTDTPTAGRSAPLISPGPVIPPPDFGPLDRAQGWAMTAIITALAAITRFLNLGSPTDAGTPIFDEKHYAPQAWQVLHNDGVEDNPGYGLVVHPPVGKQLIAIGEWLFGYNGLGWRFSGAVCGVIIVMLVTRIARRISRSTLVGAIAGLLIIADGVSFVSSRTALLDVFLVMFAVAAFACLMVDRDQVRERMYHAFLDGRIAETRWGPRLGVRWWRFGAGVLLGLACATKWSGLYFVLFFGVMTLVFDAIARKQYHVPHPWRGMLRRDLGPAAYVFGLIPFAVYLASYAPWFASETAVNRYEVGRSIGPDSILPIPDALRSLWHYTHAAYRFHSNLTNADGNHHPWESKPWTWPMSLRPVLYAIDNQDVPGCGAQSCVKAVMLVGTPAMWFIAVPVLGWALWRTVVRRDWRYGAVLVGYMAGFLPWFADIDRQMYFFYATVMAPFLVLAIALILGDILYKPNQNPERRTLGLLTVCFYVALVITNFAWMYPILTGLPISQTTWNLQIWLPSWR.

Polar residues predominate over residues 1–11 (MTALDTDTPTA). The segment at 1–23 (MTALDTDTPTAGRSAPLISPGPV) is disordered. 9 helical membrane-spanning segments follow: residues 113-133 (YNGL…VMLV), 143-163 (STLV…SFVS), 166-186 (TALL…CLMV), 234-254 (WSGL…DAIA), 275-295 (AAYV…APWF), 384-404 (VMLV…GWAL), 413-433 (WRYG…FADI), 437-457 (MYFF…ALIL), and 473-493 (LGLL…AWMY).

This sequence belongs to the glycosyltransferase 39 family.

The protein resides in the cell membrane. It functions in the pathway protein modification; protein glycosylation. Functionally, protein O-mannosyltransferase that catalyzes the transfer of a single mannose residue from a polyprenol phospho-mannosyl lipidic donor to the hydroxyl group of selected serine and threonine residues in acceptor proteins. Involved in DNA conjugation, in at least the recipient strain. In Mycolicibacterium smegmatis (strain MKD8) (Mycobacterium smegmatis), this protein is Polyprenol-phosphate-mannose--protein mannosyltransferase (pmt).